Here is a 477-residue protein sequence, read N- to C-terminus: Aspartyl/glutamyl-tRNA(Asn/Gln) amidotransferase subunit B (477 aa).

It belongs to the GatB/GatE family. GatB subfamily. In terms of assembly, heterotrimer of A, B and C subunits.

It carries out the reaction L-glutamyl-tRNA(Gln) + L-glutamine + ATP + H2O = L-glutaminyl-tRNA(Gln) + L-glutamate + ADP + phosphate + H(+). It catalyses the reaction L-aspartyl-tRNA(Asn) + L-glutamine + ATP + H2O = L-asparaginyl-tRNA(Asn) + L-glutamate + ADP + phosphate + 2 H(+). Allows the formation of correctly charged Asn-tRNA(Asn) or Gln-tRNA(Gln) through the transamidation of misacylated Asp-tRNA(Asn) or Glu-tRNA(Gln) in organisms which lack either or both of asparaginyl-tRNA or glutaminyl-tRNA synthetases. The reaction takes place in the presence of glutamine and ATP through an activated phospho-Asp-tRNA(Asn) or phospho-Glu-tRNA(Gln). This Oenococcus oeni (strain ATCC BAA-331 / PSU-1) protein is Aspartyl/glutamyl-tRNA(Asn/Gln) amidotransferase subunit B.